Consider the following 196-residue polypeptide: ATP-dependent Clp protease proteolytic subunit (196 aa).

Catalysis depends on serine 98, which acts as the Nucleophile. Residue histidine 123 is part of the active site.

This sequence belongs to the peptidase S14 family. In terms of assembly, fourteen ClpP subunits assemble into 2 heptameric rings which stack back to back to give a disk-like structure with a central cavity, resembling the structure of eukaryotic proteasomes.

It is found in the cytoplasm. It carries out the reaction Hydrolysis of proteins to small peptides in the presence of ATP and magnesium. alpha-casein is the usual test substrate. In the absence of ATP, only oligopeptides shorter than five residues are hydrolyzed (such as succinyl-Leu-Tyr-|-NHMec, and Leu-Tyr-Leu-|-Tyr-Trp, in which cleavage of the -Tyr-|-Leu- and -Tyr-|-Trp bonds also occurs).. Its function is as follows. Cleaves peptides in various proteins in a process that requires ATP hydrolysis. Has a chymotrypsin-like activity. Plays a major role in the degradation of misfolded proteins. The sequence is that of ATP-dependent Clp protease proteolytic subunit from Acidobacterium capsulatum (strain ATCC 51196 / DSM 11244 / BCRC 80197 / JCM 7670 / NBRC 15755 / NCIMB 13165 / 161).